The following is a 429-amino-acid chain: Glutamate-1-semialdehyde 2,1-aminomutase 2 (429 aa).

N6-(pyridoxal phosphate)lysine is present on Lys-268.

This sequence belongs to the class-III pyridoxal-phosphate-dependent aminotransferase family. HemL subfamily. In terms of assembly, homodimer. It depends on pyridoxal 5'-phosphate as a cofactor.

It localises to the cytoplasm. The catalysed reaction is (S)-4-amino-5-oxopentanoate = 5-aminolevulinate. The protein operates within porphyrin-containing compound metabolism; protoporphyrin-IX biosynthesis; 5-aminolevulinate from L-glutamyl-tRNA(Glu): step 2/2. In Staphylococcus epidermidis (strain ATCC 35984 / DSM 28319 / BCRC 17069 / CCUG 31568 / BM 3577 / RP62A), this protein is Glutamate-1-semialdehyde 2,1-aminomutase 2.